Here is a 271-residue protein sequence, read N- to C-terminus: Thioredoxin-related transmembrane protein 2 homolog (271 aa).

The N-terminal stretch at 1–28 is a signal peptide; the sequence is MTWKKQMALLAKPYYWVNILLAISYLLA. At 29-102 the chain is on the extracellular side; that stretch reads KKTQFICTRL…AILWAYADFR (74 aa). A helical transmembrane segment spans residues 103 to 123; that stretch reads YGLGFLLLCVLVGMVLPEPSY. A Thioredoxin domain is found at 112 to 262; the sequence is VLVGMVLPEP…YKEAIERLPI (151 aa). The Cytoplasmic portion of the chain corresponds to 124–271; sequence RGPEHITYFR…IAPKEAKKVQ (148 aa). Positions 268–271 match the Di-lysine motif motif; sequence KKVQ.

It localises to the membrane. This Drosophila melanogaster (Fruit fly) protein is Thioredoxin-related transmembrane protein 2 homolog.